A 1606-amino-acid polypeptide reads, in one-letter code: Pentafunctional AROM polypeptide (1606 aa).

The tract at residues 1-390 is 3-dehydroquinate synthase; sequence MANADVLKVS…YEPKATVVPD (390 aa). NAD(+)-binding positions include 45–47, 85–88, 116–118, and D121; these read DTN, ETSK, and GGV. R132 is a 7-phospho-2-dehydro-3-deoxy-D-arabino-heptonate binding site. 141-142 contributes to the NAD(+) binding site; sequence TT. 7-phospho-2-dehydro-3-deoxy-D-arabino-heptonate-binding residues include D148 and K154. NAD(+) is bound at residue K163. Residue N164 coordinates 7-phospho-2-dehydro-3-deoxy-D-arabino-heptonate. NAD(+) contacts are provided by residues 181 to 184 and N192; that span reads FLET. Zn(2+) is bound at residue E196. 7-phospho-2-dehydro-3-deoxy-D-arabino-heptonate contacts are provided by residues 196-199 and K256; that span reads EVVK. E266 serves as the catalytic Proton acceptor; for 3-dehydroquinate synthase activity. Residues 270–274 and H277 contribute to the 7-phospho-2-dehydro-3-deoxy-D-arabino-heptonate site; that span reads RNLVN. Zn(2+) is bound at residue H277. The active-site Proton acceptor; for 3-dehydroquinate synthase activity is H281. Positions 293 and 362 each coordinate 7-phospho-2-dehydro-3-deoxy-D-arabino-heptonate. Residue H293 participates in Zn(2+) binding. The EPSP synthase stretch occupies residues 403–850; it reads VIPGVPRHHP…WDDLENKIGL (448 aa). The For EPSP synthase activity role is filled by C832. Residues 875–1070 form a shikimate kinase region; that stretch reads AASIILIGMR…TSGRRSYFLC (196 aa). 882–889 provides a ligand contact to ATP; it reads GMRGTGKT. The tract at residues 1071–1296 is 3-dehydroquinase; the sequence is LTYPDVTQSF…AAPGQLSFKQ (226 aa). H1198 (proton acceptor; for 3-dehydroquinate dehydratase activity) is an active-site residue. K1226 functions as the Schiff-base intermediate with substrate; for 3-dehydroquinate dehydratase activity in the catalytic mechanism. Positions 1309-1606 are shikimate dehydrogenase; the sequence is AQRFYLFGTP…QFVFEEECES (298 aa).

This sequence in the N-terminal section; belongs to the sugar phosphate cyclases superfamily. Dehydroquinate synthase family. It in the 2nd section; belongs to the EPSP synthase family. The protein in the 3rd section; belongs to the shikimate kinase family. In the 4th section; belongs to the type-I 3-dehydroquinase family. This sequence in the C-terminal section; belongs to the shikimate dehydrogenase family. Homodimer. The cofactor is Zn(2+).

It is found in the cytoplasm. The enzyme catalyses 7-phospho-2-dehydro-3-deoxy-D-arabino-heptonate = 3-dehydroquinate + phosphate. The catalysed reaction is 3-dehydroquinate = 3-dehydroshikimate + H2O. It carries out the reaction shikimate + NADP(+) = 3-dehydroshikimate + NADPH + H(+). It catalyses the reaction shikimate + ATP = 3-phosphoshikimate + ADP + H(+). The enzyme catalyses 3-phosphoshikimate + phosphoenolpyruvate = 5-O-(1-carboxyvinyl)-3-phosphoshikimate + phosphate. It functions in the pathway metabolic intermediate biosynthesis; chorismate biosynthesis; chorismate from D-erythrose 4-phosphate and phosphoenolpyruvate: step 2/7. It participates in metabolic intermediate biosynthesis; chorismate biosynthesis; chorismate from D-erythrose 4-phosphate and phosphoenolpyruvate: step 3/7. The protein operates within metabolic intermediate biosynthesis; chorismate biosynthesis; chorismate from D-erythrose 4-phosphate and phosphoenolpyruvate: step 4/7. Its pathway is metabolic intermediate biosynthesis; chorismate biosynthesis; chorismate from D-erythrose 4-phosphate and phosphoenolpyruvate: step 5/7. It functions in the pathway metabolic intermediate biosynthesis; chorismate biosynthesis; chorismate from D-erythrose 4-phosphate and phosphoenolpyruvate: step 6/7. The AROM polypeptide catalyzes 5 consecutive enzymatic reactions in prechorismate polyaromatic amino acid biosynthesis. The sequence is that of Pentafunctional AROM polypeptide from Laccaria bicolor (strain S238N-H82 / ATCC MYA-4686) (Bicoloured deceiver).